A 161-amino-acid polypeptide reads, in one-letter code: Anther-specific protein LAT52 (161 aa).

An N-terminal signal peptide occupies residues 1–17 (MAKAIVLLSALCILALA). Disulfide bonds link Cys35–Cys106, Cys38–Cys147, and Cys59–Cys94. N-linked (GlcNAc...) asparagine glycosylation occurs at Asn61.

The protein belongs to the Ole e I family. As to expression, expressed in anthers and pollen.

May play a role during germination or early tube growth. The protein is Anther-specific protein LAT52 (LAT52) of Solanum lycopersicum (Tomato).